The primary structure comprises 338 residues: Phenylalanine--tRNA ligase alpha subunit (338 aa).

Mg(2+) is bound at residue Glu259.

The protein belongs to the class-II aminoacyl-tRNA synthetase family. Phe-tRNA synthetase alpha subunit type 1 subfamily. Tetramer of two alpha and two beta subunits. Mg(2+) is required as a cofactor.

The protein localises to the cytoplasm. It catalyses the reaction tRNA(Phe) + L-phenylalanine + ATP = L-phenylalanyl-tRNA(Phe) + AMP + diphosphate + H(+). This is Phenylalanine--tRNA ligase alpha subunit from Janthinobacterium sp. (strain Marseille) (Minibacterium massiliensis).